A 327-amino-acid polypeptide reads, in one-letter code: Complex I intermediate-associated protein 30, mitochondrial (327 aa).

A mitochondrion-targeting transit peptide spans methionine 1–leucine 24. The tract at residues proline 42–histidine 63 is disordered. Positions arginine 53–histidine 63 are enriched in basic and acidic residues. Serine 318 is subject to Phosphoserine.

It belongs to the CIA30 family. In terms of assembly, part of the mitochondrial complex I assembly/MCIA complex that comprises at least the core subunits TMEM126B, NDUFAF1, ECSIT and ACAD9 and complement subunits such as COA1 and TMEM186. Interacts with ECSIT. Interacts with ACAD9. At early stages of complex I assembly, it is found in intermediate subcomplexes that contain different subunits including NDUFB6, NDUFA6, NDUFA9, NDUFS3, NDUFS7, ND1, ND2 and ND3. Interacts with TMEM70 and TMEM242. In terms of tissue distribution, ubiquitous.

The protein resides in the mitochondrion. Its subcellular location is the mitochondrion matrix. Its function is as follows. As part of the MCIA complex, involved in the assembly of the mitochondrial complex I. This chain is Complex I intermediate-associated protein 30, mitochondrial, found in Homo sapiens (Human).